We begin with the raw amino-acid sequence, 338 residues long: tRNA (cytidine(56)-2'-O)-methyltransferase (338 aa).

Residues leucine 79 and 105 to 109 each bind S-adenosyl-L-methionine; that span reads GSEKV. Residues 188-295 enclose the HD domain; that stretch reads LINHVKSVKE…VAHADNLFAG (108 aa).

This sequence belongs to the aTrm56 family. As to quaternary structure, homodimer.

The protein localises to the cytoplasm. It catalyses the reaction cytidine(56) in tRNA + S-adenosyl-L-methionine = 2'-O-methylcytidine(56) in tRNA + S-adenosyl-L-homocysteine + H(+). Its function is as follows. Specifically catalyzes the AdoMet-dependent 2'-O-ribose methylation of cytidine at position 56 in tRNAs. The sequence is that of tRNA (cytidine(56)-2'-O)-methyltransferase from Thermoplasma volcanium (strain ATCC 51530 / DSM 4299 / JCM 9571 / NBRC 15438 / GSS1).